A 66-amino-acid chain; its full sequence is MKYTELKDKSIKELEELLHAKKAELFELRVKLKNMQLSNPNEIKKARRNIARINTAINAYYSSSVE.

Belongs to the universal ribosomal protein uL29 family.

This is Large ribosomal subunit protein uL29 (rpmC) from Helicobacter pylori (strain J99 / ATCC 700824) (Campylobacter pylori J99).